The sequence spans 369 residues: Protein-glutamate methylesterase/protein-glutamine glutaminase (369 aa).

The 118-residue stretch at 4–121 (KVLVVDDSSF…ARNRDEAVSL (118 aa)) folds into the Response regulatory domain. A 4-aspartylphosphate modification is found at aspartate 55. Positions 146-171 (ATSSARPLASRTAAPAASAPARPATT) are enriched in low complexity. The segment at 146-175 (ATSSARPLASRTAAPAASAPARPATTKFRA) is disordered. Residues 176 to 369 (SGKKYQLTAI…ERMLVEVGLA (194 aa)) form the CheB-type methylesterase domain. Active-site residues include serine 188, histidine 215, and aspartate 311.

The protein belongs to the CheB family. Post-translationally, phosphorylated by CheA. Phosphorylation of the N-terminal regulatory domain activates the methylesterase activity.

It localises to the cytoplasm. The enzyme catalyses [protein]-L-glutamate 5-O-methyl ester + H2O = L-glutamyl-[protein] + methanol + H(+). It carries out the reaction L-glutaminyl-[protein] + H2O = L-glutamyl-[protein] + NH4(+). Involved in chemotaxis. Part of a chemotaxis signal transduction system that modulates chemotaxis in response to various stimuli. Catalyzes the demethylation of specific methylglutamate residues introduced into the chemoreceptors (methyl-accepting chemotaxis proteins or MCP) by CheR. Also mediates the irreversible deamidation of specific glutamine residues to glutamic acid. The polypeptide is Protein-glutamate methylesterase/protein-glutamine glutaminase (Vibrio parahaemolyticus serotype O3:K6 (strain RIMD 2210633)).